Consider the following 515-residue polypeptide: Maturase K (515 aa).

The protein belongs to the intron maturase 2 family. MatK subfamily.

It is found in the plastid. The protein resides in the chloroplast. Functionally, usually encoded in the trnK tRNA gene intron. Probably assists in splicing its own and other chloroplast group II introns. The chain is Maturase K from Picea engelmannii (Engelmann's spruce).